The following is a 697-amino-acid chain: Lebercilin (697 aa).

The segment at Met-1–Arg-90 is disordered. Phosphoserine occurs at positions 7 and 45. A compositionally biased stretch (low complexity) spans Ser-32–Ser-45. Coiled-coil stretches lie at residues Arg-103–Ile-297 and Glu-389–Lys-485. 3 disordered regions span residues Trp-412–Glu-432, His-522–Pro-548, and Glu-606–Arg-697. Residues Glu-416–Glu-432 show a composition bias toward basic and acidic residues. Polar residues predominate over residues Ile-527–Ser-547. Residues Ser-612–Ser-626 show a composition bias toward low complexity. Residues Ser-686–Arg-697 show a composition bias toward acidic residues.

The protein belongs to the LCA5 family. In terms of assembly, interacts with NINL. Interacts with OFD1. Interacts with FAM161A. Interacts with components of the IFT complex B. Widely expressed.

Its subcellular location is the cytoplasm. The protein localises to the cytoskeleton. It localises to the cilium axoneme. It is found in the cilium basal body. The protein resides in the microtubule organizing center. Its subcellular location is the centrosome. The protein localises to the cell projection. It localises to the cilium. Its function is as follows. Involved in intraflagellar protein (IFT) transport in photoreceptor cilia. This is Lebercilin (LCA5) from Homo sapiens (Human).